Reading from the N-terminus, the 410-residue chain is UDP-N-acetylglucosamine--N-acetylmuramyl-(pentapeptide) pyrophosphoryl-undecaprenol N-acetylglucosamine transferase (410 aa).

The interval 1-34 is disordered; that stretch reads MKDTVSQPAGGRGATAPRPADAASPSCGSSPSAD. Residues 14-34 show a composition bias toward low complexity; that stretch reads ATAPRPADAASPSCGSSPSAD. UDP-N-acetyl-alpha-D-glucosamine is bound by residues 45–47, N167, R204, S238, and Q334; that span reads TAG.

The protein belongs to the glycosyltransferase 28 family. MurG subfamily.

It is found in the cell membrane. The enzyme catalyses di-trans,octa-cis-undecaprenyl diphospho-N-acetyl-alpha-D-muramoyl-L-alanyl-D-glutamyl-meso-2,6-diaminopimeloyl-D-alanyl-D-alanine + UDP-N-acetyl-alpha-D-glucosamine = di-trans,octa-cis-undecaprenyl diphospho-[N-acetyl-alpha-D-glucosaminyl-(1-&gt;4)]-N-acetyl-alpha-D-muramoyl-L-alanyl-D-glutamyl-meso-2,6-diaminopimeloyl-D-alanyl-D-alanine + UDP + H(+). It functions in the pathway cell wall biogenesis; peptidoglycan biosynthesis. Functionally, cell wall formation. Catalyzes the transfer of a GlcNAc subunit on undecaprenyl-pyrophosphoryl-MurNAc-pentapeptide (lipid intermediate I) to form undecaprenyl-pyrophosphoryl-MurNAc-(pentapeptide)GlcNAc (lipid intermediate II). This Mycobacterium bovis (strain ATCC BAA-935 / AF2122/97) protein is UDP-N-acetylglucosamine--N-acetylmuramyl-(pentapeptide) pyrophosphoryl-undecaprenol N-acetylglucosamine transferase.